We begin with the raw amino-acid sequence, 189 residues long: Elongation factor P (189 aa).

The protein belongs to the elongation factor P family.

It localises to the cytoplasm. It participates in protein biosynthesis; polypeptide chain elongation. In terms of biological role, involved in peptide bond synthesis. Stimulates efficient translation and peptide-bond synthesis on native or reconstituted 70S ribosomes in vitro. Probably functions indirectly by altering the affinity of the ribosome for aminoacyl-tRNA, thus increasing their reactivity as acceptors for peptidyl transferase. This Orientia tsutsugamushi (strain Ikeda) (Rickettsia tsutsugamushi) protein is Elongation factor P.